The chain runs to 511 residues: Arginine-containing cyclodipeptide synthase eshA (511 aa).

Positions 413–417 match the Conserved DDXXE motif motif; that stretch reads DDSAE.

This sequence belongs to the arginine-containing cyclodipeptide synthase family.

It carries out the reaction L-arginyl-tRNA(Arg) + L-leucyl-tRNA(Leu) = cyclo(L-arginyl-L-leucyl) + tRNA(Arg) + tRNA(Leu) + 2 H(+). Its pathway is secondary metabolite biosynthesis. In terms of biological role, arginine-containing cyclodipeptide synthase; part of the cluster that mediates the biosynthesis of a highly modified cyclo-arginine-leucine dipeptide (cRW). Within the pathway, eshA acts as the scaffold-generating enzyme and is responsible for formation of the cyclo-Arg-Leu diketopiperazine (cRL) from L-arginyl-tRNA(Arg) + L-Leucyl-tRNA(Leu). Additional enzymes from the cluster then further modify the cyclo-Arg-Leu diketopiperazine (cRW) scaffold. This chain is Arginine-containing cyclodipeptide synthase eshA, found in Penicillium shearii (Eupenicillium shearii).